A 608-amino-acid polypeptide reads, in one-letter code: Prolactin receptor (608 aa).

An N-terminal signal peptide occupies residues 1–19 (MSSALAYMLLVLSISLLNG). The Extracellular portion of the chain corresponds to 20–229 (QSPPGKPEIH…EIPNDFTLKD (210 aa)). Fibronectin type-III domains lie at 22-122 (PPGK…IVEP) and 124-224 (PPRN…IPND). A disulfide bond links cysteine 31 and cysteine 41. N-linked (GlcNAc...) asparagine glycosylation occurs at asparagine 54. Cysteine 70 and cysteine 81 form a disulfide bridge. N-linked (GlcNAc...) asparagine glycosylation is found at asparagine 99 and asparagine 127. Aspartate 206 and histidine 207 together coordinate Zn(2+). Positions 210-214 (WSRWG) match the WSXWS motif motif. The helical transmembrane segment at 230 to 253 (TTVWIIVAVLSAVICLIMVWAVAL) threads the bilayer. Residues 254 to 608 (KGYSMMTCIF…DPTCFMHSFH (355 aa)) lie on the Cytoplasmic side of the membrane. The Box 1 motif signature appears at 262–270 (IFPPVPGPK). Disordered stretches follow at residues 317 to 355 (DERLMPSHSKEYPGQGVKPTHLDPDSDSGHGSYDSHSLL), 377 to 419 (KPEN…TRRS), and 466 to 487 (GAKSFPSDKQNTSWPPLQEKGP). Residues 318 to 327 (ERLMPSHSKE) are compositionally biased toward basic and acidic residues. A compositionally biased stretch (low complexity) spans 345 to 354 (GHGSYDSHSL). A compositionally biased stretch (polar residues) spans 398-408 (CHTDTSKSTTW).

Belongs to the type I cytokine receptor family. Type 1 subfamily. As to quaternary structure, interacts with SMARCA1. Interacts with NEK3 and VAV2 and this interaction is prolactin-dependent.

It is found in the membrane. Its function is as follows. This is a receptor for the anterior pituitary hormone prolactin. The chain is Prolactin receptor (Prlr) from Mus musculus (Mouse).